The sequence spans 948 residues: ELKS/Rab6-interacting/CAST family member 1 (948 aa).

The tract at residues 1 to 54 (MYGSARSVGKVEPSSQSPGRSPRLPRSPRLGHRRTNSTGGSSGNSVGGGSGKTL) is disordered. Position 10 is an N6-acetyllysine (K10). Positions 13-28 (PSSQSPGRSPRLPRSP) are enriched in low complexity. Residues S17, S21, and S37 each carry the phosphoserine modification. At T38 the chain carries Phosphothreonine. The segment covering 40–51 (GSSGNSVGGGSG) has biased composition (gly residues). Residues S55, S75, S94, S796, and S937 each carry the phosphoserine modification. A coiled-coil region spans residues 144–920 (RQARDNTIMD…RMKLMADNYE (777 aa)). The span at 773–796 (KHKEQVEKKKSAQMLEEARRREDS) shows a compositional bias: basic and acidic residues. Disordered stretches follow at residues 773-801 (KHKE…SDSS) and 903-948 (QLKQ…GIWA). The span at 939-948 (DQDEEEGIWA) shows a compositional bias: acidic residues.

As to quaternary structure, interacts with the GTB-bound forms of RAB6A isoform 1 and isoform 2 and with RAB6B. The interaction was strongest with RAB6B, followed by RAB6A isoform 2 and weakest with RAB6A isoform 1. Part of a complex with CHUK, IKBKB and IKBKG. Interacts with CHUK, IKBKB and IKBKG. The interaction with IKBKG is independent of CHUK and IKBKB. Interacts with NFKBIA. Isoform 1 interacts through its C-terminus with the PDZ domains of RIMS1 and RIMS2. Interacts with ERC2/CAST1. Interacts with SDCCAG8. Part of a cortical microtubule stabilization complex (CMSC) composed of KANK1, PPFIA1, PPFIBP1, ERC1/ELKS, PHLDB2/LL5beta, CLASPs, KIF21A and possibly additional interactors; within CMSCs KANK1 and PHLDB2/LL5beta appear to be the core components for targeting of microtubule-binding proteins KIF21A and CLASPs, whereas PPFIA1, PPFIBP1 and ERC1/ELKS serve as scaffolds for protein clustering. In terms of tissue distribution, isoform 1 is specifically expressed in brain. A further probable isoform is widely expressed outside of brain It is referred to as ERC1a by PubMed:12391317 and characterized by a C-terminus identical to that of isoforms 1 in human and mouse.

It localises to the cytoplasm. The protein localises to the cytoskeleton. Its subcellular location is the microtubule organizing center. The protein resides in the centrosome. It is found in the membrane. It localises to the golgi apparatus membrane. The protein localises to the presynaptic active zone. Its subcellular location is the cell projection. The protein resides in the podosome. Regulatory subunit of the IKK complex. Probably recruits IkappaBalpha/NFKBIA to the complex. May be involved in the organization of the cytomatrix at the nerve terminals active zone (CAZ) which regulates neurotransmitter release. May be involved in vesicle trafficking at the CAZ. May be involved in Rab-6 regulated endosomes to Golgi transport. This Rattus norvegicus (Rat) protein is ELKS/Rab6-interacting/CAST family member 1 (Erc1).